Here is a 645-residue protein sequence, read N- to C-terminus: Transcription factor AN6788 (645 aa).

A disordered region spans residues methionine 1–proline 21. Residues cysteine 25–cysteine 52 constitute a DNA-binding region (zn(2)-C6 fungal-type). Residues proline 113–glutamine 131 are compositionally biased toward basic and acidic residues. Positions proline 113–serine 170 are disordered.

The protein resides in the nucleus. Its function is as follows. Transcription factors AN6788 and AN6790 act in tandem to regulate the expression of the non-reducing polyketide synthase pkfA from the aspernidine A biosynthesis cluster. They do not control the expression of the other genes involved in aspernidine A biosynthesis, nor do they regulate the expression of the highly reducing polyketide synthase AN6791 and the esterase AN6793 with which they are predicted to form a secondary metabolite biosynthesis cluster. The sequence is that of Transcription factor AN6788 from Emericella nidulans (strain FGSC A4 / ATCC 38163 / CBS 112.46 / NRRL 194 / M139) (Aspergillus nidulans).